The sequence spans 394 residues: Elongation factor Tu (394 aa).

The tr-type G domain occupies 10 to 204; that stretch reads KTHLNVGTIG…TLDTYIEDPV (195 aa). Positions 19–26 are G1; it reads GHVDHGKT. GTP is bound at residue 19–26; sequence GHVDHGKT. Thr26 serves as a coordination point for Mg(2+). The tract at residues 60–64 is G2; the sequence is GITIK. Residues 81–84 are G3; the sequence is DCPG. Residues 81 to 85 and 136 to 139 contribute to the GTP site; these read DCPGH and NKCD. Residues 136-139 form a G4 region; sequence NKCD. The interval 174–176 is G5; the sequence is SAL.

The protein belongs to the TRAFAC class translation factor GTPase superfamily. Classic translation factor GTPase family. EF-Tu/EF-1A subfamily. As to quaternary structure, monomer.

The protein resides in the cytoplasm. It carries out the reaction GTP + H2O = GDP + phosphate + H(+). GTP hydrolase that promotes the GTP-dependent binding of aminoacyl-tRNA to the A-site of ribosomes during protein biosynthesis. The chain is Elongation factor Tu from Aster yellows witches'-broom phytoplasma (strain AYWB).